A 162-amino-acid chain; its full sequence is NADH-quinone oxidoreductase subunit I 1 (162 aa).

4Fe-4S ferredoxin-type domains are found at residues 44–74 and 90–119; these read LRTY…VQAA and YKYQ…LTQE. [4Fe-4S] cluster contacts are provided by cysteine 54, cysteine 57, cysteine 60, cysteine 64, cysteine 99, cysteine 102, cysteine 105, and cysteine 109.

It belongs to the complex I 23 kDa subunit family. As to quaternary structure, NDH-1 is composed of 14 different subunits. Subunits NuoA, H, J, K, L, M, N constitute the membrane sector of the complex. [4Fe-4S] cluster serves as cofactor.

Its subcellular location is the cell membrane. The enzyme catalyses a quinone + NADH + 5 H(+)(in) = a quinol + NAD(+) + 4 H(+)(out). NDH-1 shuttles electrons from NADH, via FMN and iron-sulfur (Fe-S) centers, to quinones in the respiratory chain. The immediate electron acceptor for the enzyme in this species is believed to be ubiquinone. Couples the redox reaction to proton translocation (for every two electrons transferred, four hydrogen ions are translocated across the cytoplasmic membrane), and thus conserves the redox energy in a proton gradient. This is NADH-quinone oxidoreductase subunit I 1 from Symbiobacterium thermophilum (strain DSM 24528 / JCM 14929 / IAM 14863 / T).